A 384-amino-acid polypeptide reads, in one-letter code: Queuine tRNA-ribosyltransferase (384 aa).

The Proton acceptor role is filled by D103. Substrate is bound by residues 103 to 107 (DSGGF), D157, Q200, and G227. The segment at 258-264 (GVGTYRE) is RNA binding. The Nucleophile role is filled by D277. Residues 282–286 (TRLAR) are RNA binding; important for wobble base 34 recognition. Residues C315, C317, C320, and H346 each contribute to the Zn(2+) site.

It belongs to the queuine tRNA-ribosyltransferase family. As to quaternary structure, homodimer. Within each dimer, one monomer is responsible for RNA recognition and catalysis, while the other monomer binds to the replacement base PreQ1. It depends on Zn(2+) as a cofactor.

The catalysed reaction is 7-aminomethyl-7-carbaguanine + guanosine(34) in tRNA = 7-aminomethyl-7-carbaguanosine(34) in tRNA + guanine. Its pathway is tRNA modification; tRNA-queuosine biosynthesis. In terms of biological role, catalyzes the base-exchange of a guanine (G) residue with the queuine precursor 7-aminomethyl-7-deazaguanine (PreQ1) at position 34 (anticodon wobble position) in tRNAs with GU(N) anticodons (tRNA-Asp, -Asn, -His and -Tyr). Catalysis occurs through a double-displacement mechanism. The nucleophile active site attacks the C1' of nucleotide 34 to detach the guanine base from the RNA, forming a covalent enzyme-RNA intermediate. The proton acceptor active site deprotonates the incoming PreQ1, allowing a nucleophilic attack on the C1' of the ribose to form the product. After dissociation, two additional enzymatic reactions on the tRNA convert PreQ1 to queuine (Q), resulting in the hypermodified nucleoside queuosine (7-(((4,5-cis-dihydroxy-2-cyclopenten-1-yl)amino)methyl)-7-deazaguanosine). The polypeptide is Queuine tRNA-ribosyltransferase (Synechococcus elongatus (strain ATCC 33912 / PCC 7942 / FACHB-805) (Anacystis nidulans R2)).